The primary structure comprises 117 residues: Immunoglobulin kappa variable 9-129 (117 aa).

The first 22 residues, 1–22 (MDMRAPAQVFGFLLLWFPGARC), serve as a signal peptide directing secretion. Residues 23–45 (DIQMTQSPSSLSASLGERVSLTC) form a framework-1 region. Residues cysteine 45 and cysteine 110 are joined by a disulfide bond. A complementarity-determining-1 region spans residues 46-56 (RASQDIHGYLN). The segment at 57 to 71 (LFQQKPGETIKHLIY) is framework-2. Residues 72-78 (ETSNLDS) form a complementarity-determining-2 region. The interval 79 to 110 (GVPKRFSGSRSGSDYSLIIGSLESEDFADYYC) is framework-3. The complementarity-determining-3 stretch occupies residues 111–117 (LQYASSP).

This Mus musculus (Mouse) protein is Immunoglobulin kappa variable 9-129.